Reading from the N-terminus, the 110-residue chain is UPF0122 protein BPUM_1495 (110 aa).

It belongs to the UPF0122 family.

Functionally, might take part in the signal recognition particle (SRP) pathway. This is inferred from the conservation of its genetic proximity to ftsY/ffh. May be a regulatory protein. The chain is UPF0122 protein BPUM_1495 from Bacillus pumilus (strain SAFR-032).